The chain runs to 105 residues: Large ribosomal subunit protein uL23 (105 aa).

This sequence belongs to the universal ribosomal protein uL23 family. As to quaternary structure, part of the 50S ribosomal subunit. Contacts protein L29, and trigger factor when it is bound to the ribosome.

One of the early assembly proteins it binds 23S rRNA. One of the proteins that surrounds the polypeptide exit tunnel on the outside of the ribosome. Forms the main docking site for trigger factor binding to the ribosome. The polypeptide is Large ribosomal subunit protein uL23 (Ureaplasma urealyticum serovar 10 (strain ATCC 33699 / Western)).